Consider the following 409-residue polypeptide: Sex-determination protein fem-3 (409 aa).

As to quaternary structure, component of a complex containing fem-1, fem-2 and fem-3. Interacts with fem-1 and fem-2 (via N-terminus). Part of a E3 ubiquitin-protein ligase complex, at least composed of cul-2, elc-1, tra-1, fem-1, fem-2 and fem-3; mediates the ubiquitination and subsequent proteasomal degradation of tra-1. Interacts with sel-10. Interacts with tra-2.

Functionally, required for male development. In XO (male) animals, fem-3 directs male differentiation in all tissues. In XX (hermaphrodite animals), it specifies the first 80 or so germ cells to be sperm. Negatively regulates male development when bound to tra-2. The sequence is that of Sex-determination protein fem-3 from Caenorhabditis briggsae.